A 572-amino-acid chain; its full sequence is Proline--tRNA ligase (572 aa).

This sequence belongs to the class-II aminoacyl-tRNA synthetase family. ProS type 1 subfamily. As to quaternary structure, homodimer.

Its subcellular location is the cytoplasm. The catalysed reaction is tRNA(Pro) + L-proline + ATP = L-prolyl-tRNA(Pro) + AMP + diphosphate. In terms of biological role, catalyzes the attachment of proline to tRNA(Pro) in a two-step reaction: proline is first activated by ATP to form Pro-AMP and then transferred to the acceptor end of tRNA(Pro). As ProRS can inadvertently accommodate and process non-cognate amino acids such as alanine and cysteine, to avoid such errors it has two additional distinct editing activities against alanine. One activity is designated as 'pretransfer' editing and involves the tRNA(Pro)-independent hydrolysis of activated Ala-AMP. The other activity is designated 'posttransfer' editing and involves deacylation of mischarged Ala-tRNA(Pro). The misacylated Cys-tRNA(Pro) is not edited by ProRS. In Yersinia pestis bv. Antiqua (strain Antiqua), this protein is Proline--tRNA ligase.